Here is a 107-residue protein sequence, read N- to C-terminus: UPF0122 protein BLi01817/BL02321 (107 aa).

It belongs to the UPF0122 family.

Its function is as follows. Might take part in the signal recognition particle (SRP) pathway. This is inferred from the conservation of its genetic proximity to ftsY/ffh. May be a regulatory protein. This chain is UPF0122 protein BLi01817/BL02321, found in Bacillus licheniformis (strain ATCC 14580 / DSM 13 / JCM 2505 / CCUG 7422 / NBRC 12200 / NCIMB 9375 / NCTC 10341 / NRRL NRS-1264 / Gibson 46).